Consider the following 232-residue polypeptide: Uracil phosphoribosyltransferase (232 aa).

Residue 38–42 coordinates GTP; that stretch reads KGLVK. 5-phospho-alpha-D-ribose 1-diphosphate contacts are provided by residues arginine 87, arginine 112, and 140–148; that span reads DPMIATGST. Residues isoleucine 204 and 209 to 211 each bind uracil; that span reads GDA. Residue aspartate 210 participates in 5-phospho-alpha-D-ribose 1-diphosphate binding.

Belongs to the UPRTase family. It depends on Mg(2+) as a cofactor.

It catalyses the reaction UMP + diphosphate = 5-phospho-alpha-D-ribose 1-diphosphate + uracil. It participates in pyrimidine metabolism; UMP biosynthesis via salvage pathway; UMP from uracil: step 1/1. Allosterically activated by GTP. Its function is as follows. Catalyzes the conversion of uracil and 5-phospho-alpha-D-ribose 1-diphosphate (PRPP) to UMP and diphosphate. The polypeptide is Uracil phosphoribosyltransferase (Pyrococcus furiosus (strain ATCC 43587 / DSM 3638 / JCM 8422 / Vc1)).